A 1891-amino-acid polypeptide reads, in one-letter code: TATA-binding protein-associated factor mot1 (1891 aa).

The HEAT 1 repeat unit spans residues 30 to 68; that stretch reads PDELFNLLGRILPYLRSKSWDTRAAAAKAIGLIVANADT. 3 disordered regions span residues 184 to 216, 241 to 283, and 295 to 316; these read FVAS…LSKR, LSSR…LDRS, and FKGA…EGPN. The span at 264-275 shows a compositional bias: basic and acidic residues; that stretch reads ENGEERNGDSKP. 2 HEAT repeats span residues 473–511 and 569–606; these read SKLM…EFVK and SSFG…LEGE. The segment covering 699-710 has biased composition (low complexity); it reads SAAAPARSSPAS. The segment at 699–740 is disordered; sequence SAAAPARSSPASNTPEGTKGRRRKSEKKEAPPPSAHNVDGHM. HEAT repeat units lie at residues 957–996, 1139–1177, 1181–1216, and 1219–1257; these read PKKP…YYTT, YPWV…VITV, TMLV…VMED, and LPYV…LVPL. Residues 1316 to 1489 enclose the Helicase ATP-binding domain; it reads AFLNRYNLHG…WSLFDFLMPG (174 aa). 1329–1336 is an ATP binding site; the sequence is DDMGLGKT. Residues 1440–1443 carry the DEAH box motif; that stretch reads DEGH. Residues 1526–1565 form an HEAT 8 repeat; sequence EALHKQVLPFLLRRLKEEVLNDLPPKIIQNYYCDPSELQR. Positions 1663 to 1813 constitute a Helicase C-terminal domain; that stretch reads DLSGASYVSP…STVVNQQNAG (151 aa).

Belongs to the SNF2/RAD54 helicase family. In terms of assembly, forms the NCT transcriptional regulatory complex with nctA and nctB.

It localises to the nucleus. Functionally, regulates transcription in association with TATA binding protein (TBP). Removes TBP from the TATA box via its C-terminal ATPase activity. Both transcription activation and repression require its ATPase activity. Part of the NCT transcriptional regulatory complex that acts as a key regulator of ergosterol biosynthesis and the azole exporter cdr1B. The NCT complex binds the promoters of genes linked to azole susceptibility, and especially represses the expression of cdr1B transporter. The protein is TATA-binding protein-associated factor mot1 of Aspergillus fumigatus (strain CBS 144.89 / FGSC A1163 / CEA10) (Neosartorya fumigata).